Here is a 413-residue protein sequence, read N- to C-terminus: MAGLAPEGSQFDARQYDAKMTELLGTEQQEFFTSYDEVYESFDAMGLQENLLRGIYAYGFEKPSAIQQRGIVPFCKGLDVIQQAQSGTGKTATFCSGILQQLDYSLVECQALVLAPTRELAQQIEKVMRALGDYLGVKVHACVGGTSVREDQRILQSGVHVVVGTPGRVFDMLRRQSLRPDNIKMFVLDEADEMLSRGFKDQIYDIFQLLPPKIQVGVFSATMPPEALEITRKFMNKPVRILVKRDELTLEGIKQFYVNVDKEEWKLETLCDLYETLAITQSVIFVNTRRKVDWLTDKMRGRDHTVSATHGDMDQNTRDIIMREFRSGSSRVLITTDLLARGIDVQQVSLVINYDLPTQPENYLHRIGHSGRFGRKGVSINFVTKDDERMLFDIQKFYNVVIEELPANVADLL.

A Q motif motif is present at residues 40–68 (ESFDAMGLQENLLRGIYAYGFEKPSAIQQ). The Helicase ATP-binding domain maps to 71 to 241 (IVPFCKGLDV…RKFMNKPVRI (171 aa)). 84–91 (AQSGTGKT) contacts ATP. A DEAD box motif is present at residues 189–192 (DEAD). One can recognise a Helicase C-terminal domain in the interval 252–413 (GIKQFYVNVD…ELPANVADLL (162 aa)).

It belongs to the DEAD box helicase family. eIF4A subfamily. In terms of assembly, eIF4F is a multi-subunit complex, the composition of which varies with external and internal environmental conditions. It is composed of at least EIF4A, EIF4E and EIF4G.

It catalyses the reaction ATP + H2O = ADP + phosphate + H(+). In terms of biological role, ATP-dependent RNA helicase which is a subunit of the eIF4F complex involved in cap recognition and is required for mRNA binding to ribosome. In the current model of translation initiation, eIF4A unwinds RNA secondary structures in the 5'-UTR of mRNAs which is necessary to allow efficient binding of the small ribosomal subunit, and subsequent scanning for the initiator codon. This Nicotiana tabacum (Common tobacco) protein is Eukaryotic initiation factor 4A-11.